Consider the following 68-residue polypeptide: MTLEMRMVELETRQAFQDDAIQALNDVVVEQARVIERLQLQMAELIKRHEEMVGQYGSEGEEAPPPHY.

The protein belongs to the SlyX family.

The chain is Protein SlyX homolog from Pseudomonas putida (strain ATCC 700007 / DSM 6899 / JCM 31910 / BCRC 17059 / LMG 24140 / F1).